Reading from the N-terminus, the 202-residue chain is GTP cyclohydrolase 1 (202 aa).

Zn(2+) contacts are provided by Cys-90, His-93, and Cys-163.

The protein belongs to the GTP cyclohydrolase I family. In terms of assembly, toroid-shaped homodecamer, composed of two pentamers of five dimers.

It catalyses the reaction GTP + H2O = 7,8-dihydroneopterin 3'-triphosphate + formate + H(+). Its pathway is cofactor biosynthesis; 7,8-dihydroneopterin triphosphate biosynthesis; 7,8-dihydroneopterin triphosphate from GTP: step 1/1. The polypeptide is GTP cyclohydrolase 1 (folE) (Mycobacterium bovis (strain ATCC BAA-935 / AF2122/97)).